The primary structure comprises 203 residues: Thymidine kinase (203 aa).

Residues 21–28 (GCMFAGKT) and 99–102 (DEIQ) contribute to the ATP site. Glutamate 100 serves as the catalytic Proton acceptor. Zn(2+) is bound by residues cysteine 156, cysteine 159, cysteine 194, and cysteine 197.

Belongs to the thymidine kinase family. In terms of assembly, homotetramer.

Its subcellular location is the cytoplasm. The catalysed reaction is thymidine + ATP = dTMP + ADP + H(+). The protein is Thymidine kinase of Mesoplasma florum (strain ATCC 33453 / NBRC 100688 / NCTC 11704 / L1) (Acholeplasma florum).